The following is a 165-amino-acid chain: 2-C-methyl-D-erythritol 2,4-cyclodiphosphate synthase (165 aa).

2 residues coordinate a divalent metal cation: Asp-11 and His-13. 4-CDP-2-C-methyl-D-erythritol 2-phosphate contacts are provided by residues 11 to 13 and 40 to 41; these read DVH and HS. Residue His-48 participates in a divalent metal cation binding. Residues 62 to 64, 67 to 71, 137 to 140, Phe-144, and Arg-147 each bind 4-CDP-2-C-methyl-D-erythritol 2-phosphate; these read DIG, FPDTD, and TTSE.

Belongs to the IspF family. Homotrimer. It depends on a divalent metal cation as a cofactor.

The catalysed reaction is 4-CDP-2-C-methyl-D-erythritol 2-phosphate = 2-C-methyl-D-erythritol 2,4-cyclic diphosphate + CMP. The protein operates within isoprenoid biosynthesis; isopentenyl diphosphate biosynthesis via DXP pathway; isopentenyl diphosphate from 1-deoxy-D-xylulose 5-phosphate: step 4/6. Its function is as follows. Involved in the biosynthesis of isopentenyl diphosphate (IPP) and dimethylallyl diphosphate (DMAPP), two major building blocks of isoprenoid compounds. Catalyzes the conversion of 4-diphosphocytidyl-2-C-methyl-D-erythritol 2-phosphate (CDP-ME2P) to 2-C-methyl-D-erythritol 2,4-cyclodiphosphate (ME-CPP) with a corresponding release of cytidine 5-monophosphate (CMP). The chain is 2-C-methyl-D-erythritol 2,4-cyclodiphosphate synthase from Rubrobacter xylanophilus (strain DSM 9941 / JCM 11954 / NBRC 16129 / PRD-1).